Consider the following 134-residue polypeptide: Small ribosomal subunit protein bS16 (134 aa).

The tract at residues 79-134 (AGIAKRPSRNNPTKGEPGKKAQERLALAKQAEEEASAKAAEAAAAAAAPAEEAASE) is disordered. Residues 115–134 (AKAAEAAAAAAAPAEEAASE) are compositionally biased toward low complexity.

The protein belongs to the bacterial ribosomal protein bS16 family.

This Brucella abortus (strain S19) protein is Small ribosomal subunit protein bS16.